Consider the following 408-residue polypeptide: MVQVNENYLKLKAGYLFPEIAKRVKAYSQSNKSADIIKLGIGDVTEPLPRACIEAMGKALDEMGTTDGFKGYGPEQGYSWLREKISEHDFISRGCQISSEEIFVSDGSKCDSSNILDILGKDNSIAVTDPVYPVYVDSNVMTGRTGDSLENGTYKGLTYLAINEDNNFLPELPEKKVDILYLCFPNNPTGATINKADLKKWVDYALQNKSLILFDAAYEAFIQDDNIPHSIYEIEGAKDCAIEFRSFSKNAGFTGVRCAFTVIPKNLKGLSSTNEEIDLWPLWNRRQSTKFNGVSYVVQRGAEAVYSLEGKKQVKGLIDFYMENAKIMKNKLQNAGYKVYGGDNAPYIWIKVPDQMSSWDFFDFLLQKVGVVGTPGSGFGLAGEGYFRLSAFNSRSNVLDAMERIINI.

The substrate site is built by Tyr15 and Gly42. Residues Tyr72, 108–109, Tyr132, Asn187, Tyr218, and 246–248 contribute to the pyridoxal 5'-phosphate site; these read SK and SFS. The substrate site is built by Lys109, Tyr132, and Asn187. An N6-(pyridoxal phosphate)lysine modification is found at Lys249. Pyridoxal 5'-phosphate contacts are provided by Arg257 and Asn292. Positions 292 and 388 each coordinate substrate.

Belongs to the class-I pyridoxal-phosphate-dependent aminotransferase family. LL-diaminopimelate aminotransferase subfamily. Homodimer. Pyridoxal 5'-phosphate serves as cofactor.

It carries out the reaction (2S,6S)-2,6-diaminopimelate + 2-oxoglutarate = (S)-2,3,4,5-tetrahydrodipicolinate + L-glutamate + H2O + H(+). Its pathway is amino-acid biosynthesis; L-lysine biosynthesis via DAP pathway; LL-2,6-diaminopimelate from (S)-tetrahydrodipicolinate (aminotransferase route): step 1/1. Its function is as follows. Involved in the synthesis of meso-diaminopimelate (m-DAP or DL-DAP), required for both lysine and peptidoglycan biosynthesis. Catalyzes the direct conversion of tetrahydrodipicolinate to LL-diaminopimelate. The protein is LL-diaminopimelate aminotransferase of Prochlorococcus marinus (strain MIT 9301).